The sequence spans 137 residues: Large ribosomal subunit protein uL16 (137 aa).

The protein belongs to the universal ribosomal protein uL16 family. Part of the 50S ribosomal subunit.

Binds 23S rRNA and is also seen to make contacts with the A and possibly P site tRNAs. This is Large ribosomal subunit protein uL16 from Pseudomonas aeruginosa (strain LESB58).